The primary structure comprises 516 residues: MRPRQRFRRFHPRWSKVNLRGFGGVGALKGVKALNGMNVRVSMRLKWISNRIHRIRRSRRLGRLSISVRPNGSWQVYLLSSLPLRSLSRVWGQFNRAHLPTFLRTPGFKLYAWVFGCNLSELKDPDLTHYRNFQDFFCRELRPETRPVDPVSPVVSPVDGRIVCQGVVDNNRIQHVKGLSYSLEALLGGISSSNPLVVNFEDEITPDLIQKHEQFAEQHSISLNSNNRYRKADASAAVVDEHSDEEALLCAFTDHPHFYLNDSRNSLNYFCPFSAFEDISNSVRSSCGKRLSPSSNFDLNNLGGDDDLRSESSSDFESAPASILEHEPTNWDDWVQEADVTDIDSLPWHNIRPGNKLFYSVIYLAPGDYHRFHSPADWVIESRRHFSGELFSVSPFLARRLHNLFVLNERVALLGRYEHGFMSMIPVGATNVGSIVINCDPTLSTNRLVLRKKSLGTFQEAVYKNASPVLDGMPVSRGEQVGGFQLGSTVVLVFEAPADFEFSTYQGQYVRVGEAL.

The transit peptide at 1 to 21 (MRPRQRFRRFHPRWSKVNLRG) directs the protein to the mitochondrion. Residues 22–33 (FGGVGALKGVKA) lie on the Mitochondrial matrix side of the membrane. Residues 34 to 52 (LNGMNVRVSMRLKWISNRI) traverse the membrane as a helical segment. At 53–516 (HRIRRSRRLG…GQYVRVGEAL (464 aa)) the chain is on the mitochondrial intermembrane side. Residues Asp-159, His-373, and Ser-488 each act as charge relay system; for autoendoproteolytic cleavage activity in the active site. Ser-488 functions as the Schiff-base intermediate with substrate; via pyruvic acid; for decarboxylase activity in the catalytic mechanism. Residue Ser-488 is modified to Pyruvic acid (Ser); by autocatalysis.

It belongs to the phosphatidylserine decarboxylase family. PSD-B subfamily. Eukaryotic type I sub-subfamily. As to quaternary structure, heterodimer of a large membrane-associated beta subunit and a small pyruvoyl-containing alpha subunit. Pyruvate serves as cofactor. Is synthesized initially as an inactive proenzyme. Formation of the active enzyme involves a self-maturation process in which the active site pyruvoyl group is generated from an internal serine residue via an autocatalytic post-translational modification. Two non-identical subunits are generated from the proenzyme in this reaction, and the pyruvate is formed at the N-terminus of the alpha chain, which is derived from the carboxyl end of the proenzyme. The autoendoproteolytic cleavage occurs by a canonical serine protease mechanism, in which the side chain hydroxyl group of the serine supplies its oxygen atom to form the C-terminus of the beta chain, while the remainder of the serine residue undergoes an oxidative deamination to produce ammonia and the pyruvoyl prosthetic group on the alpha chain. During this reaction, the Ser that is part of the protease active site of the proenzyme becomes the pyruvoyl prosthetic group, which constitutes an essential element of the active site of the mature decarboxylase.

The protein localises to the mitochondrion. It is found in the mitochondrion inner membrane. Its subcellular location is the nucleus envelope. The protein resides in the lipid droplet. It localises to the endoplasmic reticulum membrane. The enzyme catalyses a 1,2-diacyl-sn-glycero-3-phospho-L-serine + H(+) = a 1,2-diacyl-sn-glycero-3-phosphoethanolamine + CO2. It participates in phospholipid metabolism; phosphatidylethanolamine biosynthesis; phosphatidylethanolamine from CDP-diacylglycerol: step 2/2. Functionally, catalyzes the formation of phosphatidylethanolamine (PtdEtn) from phosphatidylserine (PtdSer). Plays a central role in phospholipid metabolism and in the interorganelle trafficking of phosphatidylserine. Together with psd1 and psd3, responsible for the majority of phosphatidylethanolamine synthesis. Plays a role in lipid droplet biogenesis at the endoplasmic reticulum membrane. This chain is Phosphatidylserine decarboxylase proenzyme 2, mitochondrial, found in Schizosaccharomyces pombe (strain 972 / ATCC 24843) (Fission yeast).